The chain runs to 474 residues: 3-isopropylmalate dehydratase large subunit (474 aa).

The interval 293 to 313 (GTTPGQGIGITEEIPAPEDLP) is disordered. Positions 348, 408, and 411 each coordinate [4Fe-4S] cluster.

The protein belongs to the aconitase/IPM isomerase family. LeuC type 1 subfamily. Heterodimer of LeuC and LeuD. It depends on [4Fe-4S] cluster as a cofactor.

It carries out the reaction (2R,3S)-3-isopropylmalate = (2S)-2-isopropylmalate. It functions in the pathway amino-acid biosynthesis; L-leucine biosynthesis; L-leucine from 3-methyl-2-oxobutanoate: step 2/4. Functionally, catalyzes the isomerization between 2-isopropylmalate and 3-isopropylmalate, via the formation of 2-isopropylmaleate. The polypeptide is 3-isopropylmalate dehydratase large subunit (Natronomonas pharaonis (strain ATCC 35678 / DSM 2160 / CIP 103997 / JCM 8858 / NBRC 14720 / NCIMB 2260 / Gabara) (Halobacterium pharaonis)).